We begin with the raw amino-acid sequence, 118 residues long: Protein YLR162W (118 aa).

Residues 1–20 (MQHTLTRTASLPERSSSAHS) show a composition bias toward polar residues. The interval 1-26 (MQHTLTRTASLPERSSSAHSAATALP) is disordered. Residues 38–58 (LVPLLCIFWFVFVSMSPLPPA) traverse the membrane as a helical segment.

The protein resides in the membrane. Its function is as follows. Overexpression confers resistance to the antimicrobial peptide MiAMP1. This is Protein YLR162W from Saccharomyces cerevisiae (strain ATCC 204508 / S288c) (Baker's yeast).